The sequence spans 366 residues: tRNA/tmRNA (uracil-C(5))-methyltransferase (366 aa).

S-adenosyl-L-methionine-binding residues include Gln-190, Tyr-218, Asn-223, Glu-239, and Asp-299. Cys-324 (nucleophile) is an active-site residue. Residue Glu-358 is the Proton acceptor of the active site.

It belongs to the class I-like SAM-binding methyltransferase superfamily. RNA M5U methyltransferase family. TrmA subfamily.

It catalyses the reaction uridine(54) in tRNA + S-adenosyl-L-methionine = 5-methyluridine(54) in tRNA + S-adenosyl-L-homocysteine + H(+). The enzyme catalyses uridine(341) in tmRNA + S-adenosyl-L-methionine = 5-methyluridine(341) in tmRNA + S-adenosyl-L-homocysteine + H(+). In terms of biological role, dual-specificity methyltransferase that catalyzes the formation of 5-methyluridine at position 54 (m5U54) in all tRNAs, and that of position 341 (m5U341) in tmRNA (transfer-mRNA). In Escherichia coli O81 (strain ED1a), this protein is tRNA/tmRNA (uracil-C(5))-methyltransferase.